Reading from the N-terminus, the 388-residue chain is Galactokinase (388 aa).

Residue 33-36 (EHTD) coordinates substrate. ATP-binding positions include serine 67 and 125-131 (GAGLSSS). Residues serine 131 and glutamate 163 each contribute to the Mg(2+) site. Aspartate 175 functions as the Proton acceptor in the catalytic mechanism. Substrate is bound at residue tyrosine 225.

It belongs to the GHMP kinase family. GalK subfamily.

The protein resides in the cytoplasm. It catalyses the reaction alpha-D-galactose + ATP = alpha-D-galactose 1-phosphate + ADP + H(+). It functions in the pathway carbohydrate metabolism; galactose metabolism. Functionally, catalyzes the transfer of the gamma-phosphate of ATP to D-galactose to form alpha-D-galactose-1-phosphate (Gal-1-P). This chain is Galactokinase, found in Limosilactobacillus fermentum (strain NBRC 3956 / LMG 18251) (Lactobacillus fermentum).